A 179-amino-acid polypeptide reads, in one-letter code: Pyridoxal 5'-phosphate synthase subunit PdxT (179 aa).

48-50 is an L-glutamine binding site; sequence GES. Cys-79 acts as the Nucleophile in catalysis. L-glutamine-binding positions include Arg-101 and 127–128; that span reads IR. Catalysis depends on charge relay system residues His-163 and Glu-165.

The protein belongs to the glutaminase PdxT/SNO family. In terms of assembly, in the presence of PdxS, forms a dodecamer of heterodimers. Only shows activity in the heterodimer.

It catalyses the reaction aldehydo-D-ribose 5-phosphate + D-glyceraldehyde 3-phosphate + L-glutamine = pyridoxal 5'-phosphate + L-glutamate + phosphate + 3 H2O + H(+). The catalysed reaction is L-glutamine + H2O = L-glutamate + NH4(+). It functions in the pathway cofactor biosynthesis; pyridoxal 5'-phosphate biosynthesis. Functionally, catalyzes the hydrolysis of glutamine to glutamate and ammonia as part of the biosynthesis of pyridoxal 5'-phosphate. The resulting ammonia molecule is channeled to the active site of PdxS. The chain is Pyridoxal 5'-phosphate synthase subunit PdxT from Francisella tularensis subsp. tularensis (strain FSC 198).